We begin with the raw amino-acid sequence, 105 residues long: Small ribosomal subunit protein eS24 (105 aa).

Residues 85–105 (SVIAKNEEPEEEPEEEAEDAE) form a disordered region. Acidic residues predominate over residues 92–105 (EPEEEPEEEAEDAE).

It belongs to the eukaryotic ribosomal protein eS24 family.

In Methanosphaera stadtmanae (strain ATCC 43021 / DSM 3091 / JCM 11832 / MCB-3), this protein is Small ribosomal subunit protein eS24.